A 741-amino-acid chain; its full sequence is Methionine--tRNA ligase (741 aa).

Residues M1–S22 are compositionally biased toward polar residues. Positions M1–T25 are disordered. The short motif at P36–H46 is the 'HIGH' region element. Zn(2+) contacts are provided by C167, C170, C179, and C183. A disordered region spans residues V309–I329. Positions S311–I329 are enriched in low complexity. T381 is a binding site for ATP. A disordered region spans residues K591 to T629. The span at P599 to T611 shows a compositional bias: acidic residues. The span at A616 to T629 shows a compositional bias: polar residues. One can recognise a tRNA-binding domain in the interval E643–Q741.

It belongs to the class-I aminoacyl-tRNA synthetase family. MetG type 1 subfamily. In terms of assembly, homodimer. Zn(2+) is required as a cofactor.

It localises to the cytoplasm. The catalysed reaction is tRNA(Met) + L-methionine + ATP = L-methionyl-tRNA(Met) + AMP + diphosphate. Its function is as follows. Is required not only for elongation of protein synthesis but also for the initiation of all mRNA translation through initiator tRNA(fMet) aminoacylation. This Haloquadratum walsbyi (strain DSM 16790 / HBSQ001) protein is Methionine--tRNA ligase.